Here is an 807-residue protein sequence, read N- to C-terminus: Glycerol-3-phosphate acyltransferase (807 aa).

The HXXXXD motif motif lies at 305 to 310 (CHRSHM).

It belongs to the GPAT/DAPAT family.

It is found in the cell inner membrane. The enzyme catalyses sn-glycerol 3-phosphate + an acyl-CoA = a 1-acyl-sn-glycero-3-phosphate + CoA. It functions in the pathway phospholipid metabolism; CDP-diacylglycerol biosynthesis; CDP-diacylglycerol from sn-glycerol 3-phosphate: step 1/3. This is Glycerol-3-phosphate acyltransferase from Aliivibrio salmonicida (strain LFI1238) (Vibrio salmonicida (strain LFI1238)).